The primary structure comprises 1045 residues: MSGPLRSERKVVGFVRDPLPKVGSLSLKSEHAQADLEHLGWRNVESLDLLWGLSGAGDPDVALNLLIRLYQALEAIGEDARNELDQEIRQDEKLRVRLFALLGGSSAVGDHLVANPLQWKLLKLDAPSREEMFQALLESVKAQPAVLEVEDFSDAHNIARDDLSTPGFYTASVTGPEAERVLKWTYRTLLTRIAAHDLAGTYPTDMRRKGGDPVPFSTVTMQLSDLADAALTAALAVAIANVYGEKPVDSALSVIAMGKCGAQELNYISDVDVVFVAEPANSKSTRTAAELIRIGSNSFFEVDAALRPEGKSGALVRSLDSHMAYYKRWAETWEFQALLKARPMTGDINLGQSYVDALSPLIWTASQRESFVTDVQAMRRRVLDNVPEDLRDRELKLGRGGLRDVEFAVQLLQMVHGRIDETLRVRSTVNALHVLVDQGYVGREDGHNLIESYEFLRLLEHRLQLERIKRTHLLPKPDDRMNMRWLARASGFTGSMEQSSAKAMERHLRKVRLQIQSLHSQLFYRPLLNSVVNLSADAIRLSPDAAKLQLAALGYLHPSRAYEHLTALASGASRKAKIQAMLLPTLMEWLSQTAEPDAGLLNYRKLSDASYDRSWFLRMLRDEGVVGQRLMRILGNSPYISELIISTPDFMKQLGDAASGPKLLATAPTQVVKAIKATVSRHESPDRAIQAARSLRRQELARIASADLLNMLTVQEVCQSLSLVWDAVLDAALDAEIRAALNDPQKPDQPLANISVIGMGRLGGAELGYGSDADVMFVCEPVAGVEEHEAVTWSIAICDSMRSRLAQPSGDPPLEVDLGLRPEGRSGAIVRTVDSYVKYYEKWGETWEIQALLRAAWVAGDRELGIKFLESIDRFRYPVDGATQAQLREVRRIKARVDNERLPRGADRNTHTKLGRGALTDIEWTVQLLTMMHAHEIPELHNTSTLEVLEVLEKHQIINPVQVQTLREAWLTATAARNALVLVRGKRLDQLPTPGPHLAQVAGASGWDPNEYQEYLENYLKVTRKSRQVVDEVFWGVDSMEQREF.

Positions 1-527 (MSGPLRSERK…LHSQLFYRPL (527 aa)) are adenylyl removase. Residues 533–1045 (NLSADAIRLS…GVDSMEQREF (513 aa)) form an adenylyl transferase region.

This sequence belongs to the GlnE family. It depends on Mg(2+) as a cofactor.

The enzyme catalyses [glutamine synthetase]-O(4)-(5'-adenylyl)-L-tyrosine + phosphate = [glutamine synthetase]-L-tyrosine + ADP. The catalysed reaction is [glutamine synthetase]-L-tyrosine + ATP = [glutamine synthetase]-O(4)-(5'-adenylyl)-L-tyrosine + diphosphate. Involved in the regulation of glutamine synthetase GlnA, a key enzyme in the process to assimilate ammonia. When cellular nitrogen levels are high, the C-terminal adenylyl transferase (AT) inactivates GlnA by covalent transfer of an adenylyl group from ATP to specific tyrosine residue of GlnA, thus reducing its activity. Conversely, when nitrogen levels are low, the N-terminal adenylyl removase (AR) activates GlnA by removing the adenylyl group by phosphorolysis, increasing its activity. The regulatory region of GlnE binds the signal transduction protein PII (GlnB) which indicates the nitrogen status of the cell. The sequence is that of Bifunctional glutamine synthetase adenylyltransferase/adenylyl-removing enzyme from Corynebacterium glutamicum (strain ATCC 13032 / DSM 20300 / JCM 1318 / BCRC 11384 / CCUG 27702 / LMG 3730 / NBRC 12168 / NCIMB 10025 / NRRL B-2784 / 534).